Here is a 312-residue protein sequence, read N- to C-terminus: Acetyl-coenzyme A carboxylase carboxyl transferase subunit alpha (312 aa).

One can recognise a CoA carboxyltransferase C-terminal domain in the interval 36 to 286; sequence RLDKEVKSIY…KEYFLDALRT (251 aa).

This sequence belongs to the AccA family. As to quaternary structure, acetyl-CoA carboxylase is a heterohexamer composed of biotin carboxyl carrier protein (AccB), biotin carboxylase (AccC) and two subunits each of ACCase subunit alpha (AccA) and ACCase subunit beta (AccD).

It localises to the cytoplasm. The enzyme catalyses N(6)-carboxybiotinyl-L-lysyl-[protein] + acetyl-CoA = N(6)-biotinyl-L-lysyl-[protein] + malonyl-CoA. Its pathway is lipid metabolism; malonyl-CoA biosynthesis; malonyl-CoA from acetyl-CoA: step 1/1. Component of the acetyl coenzyme A carboxylase (ACC) complex. First, biotin carboxylase catalyzes the carboxylation of biotin on its carrier protein (BCCP) and then the CO(2) group is transferred by the carboxyltransferase to acetyl-CoA to form malonyl-CoA. This Helicobacter pylori (strain Shi470) protein is Acetyl-coenzyme A carboxylase carboxyl transferase subunit alpha.